A 350-amino-acid chain; its full sequence is Patr class I histocompatibility antigen, alpha chain E (350 aa).

The signal sequence occupies residues 1-21; it reads MVDGTLLLLLSEALALTQTWA. The segment at 22–111 is alpha-1; it reads GSHSLKYFHT…LRGYYNQSEA (90 aa). The Extracellular segment spans residues 22 to 305; sequence GSHSLKYFHT…KPASQPTIPI (284 aa). Asparagine 107 is a glycosylation site (N-linked (GlcNAc...) asparagine). The tract at residues 112–203 is alpha-2; that stretch reads GSHTLQWMHG…EKGKETLLHL (92 aa). Disulfide bonds link cysteine 122–cysteine 185 and cysteine 224–cysteine 280. Residues 204–295 form an alpha-3 region; the sequence is EPPKTHVTHH…GLPEPLTLRW (92 aa). An Ig-like C1-type domain is found at 206–294; that stretch reads PKTHVTHHPI…EGLPEPLTLR (89 aa). The segment at 296-305 is connecting peptide; the sequence is KPASQPTIPI. A helical transmembrane segment spans residues 306–329; sequence VGIIAGLVLLGSVVSGAVVAAVMW. Residues 330-350 lie on the Cytoplasmic side of the membrane; it reads RKKSSGGKGRSYSKAEWSDSA.

This sequence belongs to the MHC class I family. Heterodimer of an alpha chain and a beta chain (beta-2-microglobulin).

The protein resides in the membrane. Its function is as follows. Preferably binds to a peptide derived from the signal sequence of most HLA-A, -B, -C and -G molecules. The polypeptide is Patr class I histocompatibility antigen, alpha chain E (Patr-E) (Pan troglodytes (Chimpanzee)).